The chain runs to 549 residues: Oxygen-dependent choline dehydrogenase (549 aa).

4–33 (DYVIVGSGSAGSAIAYRLSEDGRYSVIVIE) lines the FAD pocket. Histidine 465 serves as the catalytic Proton acceptor. The interval 528–549 (KTPLPRSNQEPWVNPRAAVSDR) is disordered.

The protein belongs to the GMC oxidoreductase family. The cofactor is FAD.

The enzyme catalyses choline + A = betaine aldehyde + AH2. The catalysed reaction is betaine aldehyde + NAD(+) + H2O = glycine betaine + NADH + 2 H(+). Its pathway is amine and polyamine biosynthesis; betaine biosynthesis via choline pathway; betaine aldehyde from choline (cytochrome c reductase route): step 1/1. Involved in the biosynthesis of the osmoprotectant glycine betaine. Catalyzes the oxidation of choline to betaine aldehyde and betaine aldehyde to glycine betaine at the same rate. This chain is Oxygen-dependent choline dehydrogenase, found in Agrobacterium fabrum (strain C58 / ATCC 33970) (Agrobacterium tumefaciens (strain C58)).